The sequence spans 293 residues: PHD finger protein 11A (293 aa).

The C2HC pre-PHD-type zinc finger occupies 25–61 (KRTCALCPEGHEWSQIYFSPSANIVAHENCLLYSSGL). Residues 91-143 (LKCSFCKNKGATMGYDLQSCTKNYHLSCAMEDHAILQVDEDHGTYKLFCQKHA) form a PHD-type; degenerate zinc finger. Residues 262–293 (SSSTSGSLLPPEDHQVRCQESPEVQAGSGDSL) form a disordered region.

The protein resides in the nucleus. The chain is PHD finger protein 11A (Phf11a) from Mus musculus (Mouse).